The chain runs to 363 residues: Peptide chain release factor 1 (363 aa).

An N5-methylglutamine modification is found at glutamine 236. Residues 286–305 (KKEMERSTMRKSQIGSGDRS) are disordered.

It belongs to the prokaryotic/mitochondrial release factor family. Post-translationally, methylated by PrmC. Methylation increases the termination efficiency of RF1.

Its subcellular location is the cytoplasm. Functionally, peptide chain release factor 1 directs the termination of translation in response to the peptide chain termination codons UAG and UAA. The sequence is that of Peptide chain release factor 1 from Wolbachia pipientis subsp. Culex pipiens (strain wPip).